We begin with the raw amino-acid sequence, 404 residues long: Sorting nexin-5 (404 aa).

Ala-2 is subject to N-acetylalanine. Residues 25–172 enclose the PX domain; sequence LNVDPSLQID…HVFLEYDQDL (148 aa). Residues 40–46, 99–105, and 113–116 each bind a 1,2-diacyl-sn-glycero-3-phospho-(1D-myo-inositol-4,5-bisphosphate); these read SERDKVK, FDGPREK, and EGSM. Positions 169 to 261 are interaction with DOCK1; that stretch reads DQDLSVRRKN…HSLALEEPTV (93 aa). The tract at residues 183 to 200 is membrane-binding amphipathic helix; that stretch reads FGGFFKSVVKSADEVLFS. Ser-193 bears the Phosphoserine mark. The 203-residue stretch at 202–404 folds into the BAR domain; the sequence is VKEVDDFFEQ…QSCIDLFKNN (203 aa). Lys-275 carries the post-translational modification N6-acetyllysine.

It belongs to the sorting nexin family. Forms heterodimers with BAR domain-containing sorting nexins SNX1 and SNX2; does not homodimerize. The heterodimers are proposed to self-assemble into helical arrays on the membrane to stabilize and expand local membrane curvature underlying endosomal tubule formation. Thought to be a component of the originally described retromer complex (also called SNX-BAR retromer) which is a pentamer containing the heterotrimeric retromer cargo-selective complex (CSC), also described as vacuolar protein sorting subcomplex (VPS), and a heterodimeric membrane-deforming subcomplex formed between SNX1 or SNX2 and SNX5 or SNX6 (also called SNX-BAR subcomplex); the respective CSC and SNX-BAR subcomplexes associate with low affinity. Interacts with SNX1, SNX2, VPS26A, VPS29, VPS35, DCTN1, DOCK1, MIB1, PIP5K1C. Interacts with HGS; increased by PIP5K1C kinase activity and by PtdIns(3P) and/or PtdIns(3,4)P2.

The protein resides in the endosome. It is found in the early endosome. Its subcellular location is the early endosome membrane. The protein localises to the cell membrane. It localises to the cytoplasmic vesicle membrane. The protein resides in the cytoplasm. It is found in the cell projection. Its subcellular location is the phagocytic cup. The protein localises to the ruffle. In terms of biological role, involved in several stages of intracellular trafficking. Interacts with membranes containing phosphatidylinositol lipids. Acts in part as component of the retromer membrane-deforming SNX-BAR subcomplex. The SNX-BAR retromer mediates retrograde transport of cargo proteins from endosomes to the trans-Golgi network (TGN) and is involved in endosome-to-plasma membrane transport for cargo protein recycling. The SNX-BAR subcomplex functions to deform the donor membrane into a tubular profile called endosome-to-TGN transport carrier (ETC). Does not have in vitro vesicle-to-membrane remodeling activity. Involved in retrograde transport of lysosomal enzyme receptor IGF2R. May function as link between endosomal transport vesicles and dynactin. Plays a role in the internalization of EGFR after EGF stimulation. Involved in EGFR endosomal sorting and degradation; the function involves PIP5K1C and is retromer-independent. Together with PIP5K1C facilitates HGS interaction with ubiquitinated EGFR, which initiates EGFR sorting to intraluminal vesicles (ILVs) of the multivesicular body for subsequent lysosomal degradation. Involved in E-cadherin sorting and degradation; inhibits PIP5K1C-mediated E-cadherin degradation. Plays a role in macropinocytosis. The chain is Sorting nexin-5 (SNX5) from Bos taurus (Bovine).